We begin with the raw amino-acid sequence, 374 residues long: Pyruvate dehydrogenase E1 component subunit beta-1, mitochondrial (374 aa).

Residues 1-34 (MLGIARRRLGSGCALGQLMQALRPAAAAAAARTY) constitute a mitochondrion transit peptide. Glutamate 97 is a thiamine diphosphate binding site. Positions 150, 198, 199, and 201 each coordinate K(+).

In terms of assembly, tetramer of 2 alpha and 2 beta subunits. Thiamine diphosphate serves as cofactor.

The protein resides in the mitochondrion matrix. The enzyme catalyses N(6)-[(R)-lipoyl]-L-lysyl-[protein] + pyruvate + H(+) = N(6)-[(R)-S(8)-acetyldihydrolipoyl]-L-lysyl-[protein] + CO2. In terms of biological role, the pyruvate dehydrogenase complex catalyzes the overall conversion of pyruvate to acetyl-CoA and CO(2). It contains multiple copies of three enzymatic components: pyruvate dehydrogenase (E1), dihydrolipoamide acetyltransferase (E2) and lipoamide dehydrogenase (E3). This Oryza sativa subsp. japonica (Rice) protein is Pyruvate dehydrogenase E1 component subunit beta-1, mitochondrial.